A 392-amino-acid chain; its full sequence is tRNA(Met) cytidine acetate ligase (392 aa).

ATP contacts are provided by residues 7–20 (VVEYNPFHNGHQLH), G101, N162, and 187–188 (RI).

Belongs to the TmcAL family.

The protein localises to the cytoplasm. It catalyses the reaction cytidine(34) in elongator tRNA(Met) + acetate + ATP = N(4)-acetylcytidine(34) in elongator tRNA(Met) + AMP + diphosphate. In terms of biological role, catalyzes the formation of N(4)-acetylcytidine (ac(4)C) at the wobble position of elongator tRNA(Met), using acetate and ATP as substrates. First activates an acetate ion to form acetyladenylate (Ac-AMP) and then transfers the acetyl group to tRNA to form ac(4)C34. The chain is tRNA(Met) cytidine acetate ligase from Listeria welshimeri serovar 6b (strain ATCC 35897 / DSM 20650 / CCUG 15529 / CIP 8149 / NCTC 11857 / SLCC 5334 / V8).